The primary structure comprises 176 residues: MKVLFFTIALSLFSILHADDVAFSAFTPSEGTYYVQVIAVDKEFPEEEIPRDMSPLTIMYLDDGKMEARFTMKKDDNCEEINIMLEKTADPRKITMNRRLRYTCAAVRTSKQKHWILVCPREFQGETIRMAKLVGPNTDKNPKALEDFYRFIYRERFDKRRIITPKQTEACAPEHA.

The N-terminal stretch at 1–18 is a signal peptide; that stretch reads MKVLFFTIALSLFSILHA. Cys78 and Cys171 are joined by a disulfide.

It belongs to the calycin superfamily. Lipocalin family. Mammary gland. Secreted in milk.

The protein resides in the secreted. Functionally, probably serves a role in the transport of a small ligand released during the hydrolysis of milk fat. The protein is Late lactation protein of Trichosurus vulpecula (Brush-tailed possum).